The chain runs to 212 residues: Adenine phosphoribosyltransferase (212 aa).

The protein belongs to the purine/pyrimidine phosphoribosyltransferase family. Homodimer.

It localises to the cytoplasm. It carries out the reaction AMP + diphosphate = 5-phospho-alpha-D-ribose 1-diphosphate + adenine. It participates in purine metabolism; AMP biosynthesis via salvage pathway; AMP from adenine: step 1/1. Its function is as follows. Catalyzes a salvage reaction resulting in the formation of AMP, that is energically less costly than de novo synthesis. This Mycobacterium tuberculosis (strain ATCC 25618 / H37Rv) protein is Adenine phosphoribosyltransferase.